Reading from the N-terminus, the 218-residue chain is Kappa-scoloptoxin(11)-Ssd1b (218 aa).

The signal sequence occupies residues methionine 1 to serine 16. The propeptide occupies serine 17–arginine 25.

Contains 8 disulfide bonds. As to expression, expressed by the venom gland.

The protein resides in the secreted. In terms of biological role, voltage-gated potassium channel inhibitor. This is Kappa-scoloptoxin(11)-Ssd1b from Scolopendra dehaani (Thai centipede).